Consider the following 426-residue polypeptide: D-tagatose-1,6-bisphosphate aldolase subunit KbaZ (426 aa).

The protein belongs to the GatZ/KbaZ family. KbaZ subfamily. As to quaternary structure, forms a complex with KbaY.

It participates in carbohydrate metabolism; D-tagatose 6-phosphate degradation; D-glyceraldehyde 3-phosphate and glycerone phosphate from D-tagatose 6-phosphate: step 2/2. Its function is as follows. Component of the tagatose-1,6-bisphosphate aldolase KbaYZ that is required for full activity and stability of the Y subunit. Could have a chaperone-like function for the proper and stable folding of KbaY. When expressed alone, KbaZ does not show any aldolase activity. The sequence is that of D-tagatose-1,6-bisphosphate aldolase subunit KbaZ from Escherichia coli O127:H6 (strain E2348/69 / EPEC).